Consider the following 183-residue polypeptide: Transcription factor E (183 aa).

In terms of domain architecture, HTH TFE/IIEalpha-type spans 4–97; that stretch reads YIELVRRYVY…SWSIKDEDIR (94 aa).

Belongs to the TFE family. Monomer. Interaction with RNA polymerase subunits RpoF and RpoE is necessary for Tfe stimulatory transcription activity. Able to interact with Tbp and RNA polymerase in the absence of DNA promoter. Interacts both with the preinitiation and elongation complexes.

Transcription factor that plays a role in the activation of archaeal genes transcribed by RNA polymerase. Facilitates transcription initiation by enhancing TATA-box recognition by TATA-box-binding protein (Tbp), and transcription factor B (Tfb) and RNA polymerase recruitment. Not absolutely required for transcription in vitro, but particularly important in cases where Tbp or Tfb function is not optimal. It dynamically alters the nucleic acid-binding properties of RNA polymerases by stabilizing the initiation complex and destabilizing elongation complexes. Seems to translocate with the RNA polymerase following initiation and acts by binding to the non template strand of the transcription bubble in elongation complexes. In Caldivirga maquilingensis (strain ATCC 700844 / DSM 13496 / JCM 10307 / IC-167), this protein is Transcription factor E.